The following is a 783-amino-acid chain: Polyribonucleotide nucleotidyltransferase 1, mitochondrial (783 aa).

The N-terminal 45 residues, 1 to 45 (MAACRLCCLCPCLRPLGCGPLGRPGRNRALSYLQMRALWSSTGSR), are a transit peptide targeting the mitochondrion. 3 positions are modified to N6-acetyllysine: lysine 250, lysine 264, and lysine 285. At lysine 552 the chain carries N6-succinyllysine. Residues 605-664 (PVVETVKVPLSKRAKFVGPGGYHLKKLQAETGVTISQVDEETFSIFAPTPTAMHEARDFI) form the KH domain. Residues 679 to 750 (GAVYTATITE…ADGRMRLSRK (72 aa)) form the S1 motif domain. Serine 754 bears the Phosphoserine mark.

This sequence belongs to the polyribonucleotide nucleotidyltransferase family. As to quaternary structure, homotrimer; in free form. Homooligomer. Component of the mitochondrial degradosome (mtEXO) complex which is a heteropentamer containing 2 copies of SUPV3L1 and 3 copies of PNPT1. As part of the mitochondrial degradosome complex, interacts with GRSF1 in an RNA-dependent manner; the interaction enhances the activity of the complex. Interacts with TCL1A; the interaction has no effect on PNPT1 exonuclease activity.

Its subcellular location is the cytoplasm. The protein resides in the mitochondrion matrix. The protein localises to the mitochondrion intermembrane space. The catalysed reaction is RNA(n+1) + phosphate = RNA(n) + a ribonucleoside 5'-diphosphate. Functionally, RNA-binding protein implicated in numerous RNA metabolic processes. Catalyzes the phosphorolysis of single-stranded polyribonucleotides processively in the 3'-to-5' direction. Mitochondrial intermembrane factor with RNA-processing exoribonulease activity. Component of the mitochondrial degradosome (mtEXO) complex, that degrades 3' overhang double-stranded RNA with a 3'-to-5' directionality in an ATP-dependent manner. Involved in the degradation of non-coding mitochondrial transcripts (MT-ncRNA) and tRNA-like molecules. Required for correct processing and polyadenylation of mitochondrial mRNAs. Plays a role as a cytoplasmic RNA import factor that mediates the translocation of small RNA components, like the 5S RNA, the RNA subunit of ribonuclease P and the mitochondrial RNA-processing (MRP) RNA, into the mitochondrial matrix. Plays a role in mitochondrial morphogenesis and respiration; regulates the expression of the electron transport chain (ETC) components at the mRNA and protein levels. In the cytoplasm, shows a 3'-to-5' exoribonuclease mediating mRNA degradation activity; degrades c-myc mRNA upon treatment with IFNB1/IFN-beta, resulting in a growth arrest in melanoma cells. Regulates the stability of specific mature miRNAs in melanoma cells; specifically and selectively degrades miR-221, preferentially. Also plays a role in RNA cell surveillance by cleaning up oxidized RNAs. Binds to the RNA subunit of ribonuclease P, MRP RNA and miR-221 microRNA. The protein is Polyribonucleotide nucleotidyltransferase 1, mitochondrial (Pnpt1) of Mus musculus (Mouse).